Here is a 217-residue protein sequence, read N- to C-terminus: Small ribosomal subunit protein uS3 (217 aa).

In terms of domain architecture, KH type-2 spans 38-106 (IRKFVQKELA…QVHINIIEIK (69 aa)).

It belongs to the universal ribosomal protein uS3 family. Part of the 30S ribosomal subunit. Forms a tight complex with proteins S10 and S14.

Binds the lower part of the 30S subunit head. Binds mRNA in the 70S ribosome, positioning it for translation. The polypeptide is Small ribosomal subunit protein uS3 (Streptococcus gordonii (strain Challis / ATCC 35105 / BCRC 15272 / CH1 / DL1 / V288)).